A 127-amino-acid polypeptide reads, in one-letter code: Alpha-hordothionin (127 aa).

The first 18 residues, 1-18, serve as a signal peptide directing secretion; the sequence is MVCLLILGLVLEQVQVEG. 4 disulfide bridges follow: C21-C57, C22-C49, C30-C47, and C34-C43. The propeptide at 64 to 127 is acidic domain; sequence LALVSNSDEP…GDAGLTSLTA (64 aa).

The protein belongs to the plant thionin (TC 1.C.44) family. 4 C-C subfamily.

Its subcellular location is the secreted. Its function is as follows. Thionins are small plant proteins which are toxic to animal cells. They seem to exert their toxic effect at the level of the cell membrane. Their precise function is not known. The sequence is that of Alpha-hordothionin (THI1.1) from Hordeum vulgare (Barley).